Reading from the N-terminus, the 295-residue chain is Ribosomal RNA small subunit methyltransferase A (295 aa).

S-adenosyl-L-methionine-binding residues include Asn-29, Leu-31, Gly-56, Glu-77, Asp-102, and Asn-128.

The protein belongs to the class I-like SAM-binding methyltransferase superfamily. rRNA adenine N(6)-methyltransferase family. RsmA subfamily.

It is found in the cytoplasm. The catalysed reaction is adenosine(1518)/adenosine(1519) in 16S rRNA + 4 S-adenosyl-L-methionine = N(6)-dimethyladenosine(1518)/N(6)-dimethyladenosine(1519) in 16S rRNA + 4 S-adenosyl-L-homocysteine + 4 H(+). Specifically dimethylates two adjacent adenosines (A1518 and A1519) in the loop of a conserved hairpin near the 3'-end of 16S rRNA in the 30S particle. May play a critical role in biogenesis of 30S subunits. The sequence is that of Ribosomal RNA small subunit methyltransferase A from Listeria welshimeri serovar 6b (strain ATCC 35897 / DSM 20650 / CCUG 15529 / CIP 8149 / NCTC 11857 / SLCC 5334 / V8).